A 136-amino-acid polypeptide reads, in one-letter code: Large ribosomal subunit protein uL16c (136 aa).

Residues 1–20 (MLSPKRTKFRKQHRGRMKGK) are disordered.

The protein belongs to the universal ribosomal protein uL16 family. In terms of assembly, part of the 50S ribosomal subunit.

The protein resides in the plastid. The protein localises to the chloroplast. The protein is Large ribosomal subunit protein uL16c of Brachypodium distachyon (Purple false brome).